The sequence spans 341 residues: tRNA N6-adenosine threonylcarbamoyltransferase (341 aa).

The Fe cation site is built by histidine 111 and histidine 115. Residues 134–138 (LVSGG), aspartate 167, glycine 180, and asparagine 277 contribute to the substrate site. Residue aspartate 305 participates in Fe cation binding.

Belongs to the KAE1 / TsaD family. Requires Fe(2+) as cofactor.

It is found in the cytoplasm. It catalyses the reaction L-threonylcarbamoyladenylate + adenosine(37) in tRNA = N(6)-L-threonylcarbamoyladenosine(37) in tRNA + AMP + H(+). In terms of biological role, required for the formation of a threonylcarbamoyl group on adenosine at position 37 (t(6)A37) in tRNAs that read codons beginning with adenine. Is involved in the transfer of the threonylcarbamoyl moiety of threonylcarbamoyl-AMP (TC-AMP) to the N6 group of A37, together with TsaE and TsaB. TsaD likely plays a direct catalytic role in this reaction. In Chromobacterium violaceum (strain ATCC 12472 / DSM 30191 / JCM 1249 / CCUG 213 / NBRC 12614 / NCIMB 9131 / NCTC 9757 / MK), this protein is tRNA N6-adenosine threonylcarbamoyltransferase.